The primary structure comprises 210 residues: dITP/XTP pyrophosphatase (210 aa).

A substrate-binding site is contributed by 13 to 18; sequence THNPGK. The Mg(2+) site is built by aspartate 45 and aspartate 74. Residue aspartate 74 is the Proton acceptor of the active site. Residues serine 75, 160–163, lysine 183, and 195–196 contribute to the substrate site; these read FGYD and HR.

It belongs to the HAM1 NTPase family. Homodimer. The cofactor is Mg(2+).

It catalyses the reaction XTP + H2O = XMP + diphosphate + H(+). The catalysed reaction is dITP + H2O = dIMP + diphosphate + H(+). The enzyme catalyses ITP + H2O = IMP + diphosphate + H(+). Its function is as follows. Pyrophosphatase that catalyzes the hydrolysis of nucleoside triphosphates to their monophosphate derivatives, with a high preference for the non-canonical purine nucleotides XTP (xanthosine triphosphate), dITP (deoxyinosine triphosphate) and ITP. Seems to function as a house-cleaning enzyme that removes non-canonical purine nucleotides from the nucleotide pool, thus preventing their incorporation into DNA/RNA and avoiding chromosomal lesions. The chain is dITP/XTP pyrophosphatase from Rhodopseudomonas palustris (strain ATCC BAA-98 / CGA009).